Here is a 298-residue protein sequence, read N- to C-terminus: Ornithine carbamoyltransferase (298 aa).

Carbamoyl phosphate contacts are provided by residues 50–53 (STRT), Gln77, Arg101, and 128–131 (HPCQ). L-ornithine-binding positions include Asn159, Asp216, and 220–221 (SM). Carbamoyl phosphate is bound by residues 256 to 257 (CL) and Arg284.

This sequence belongs to the aspartate/ornithine carbamoyltransferase superfamily. OTCase family.

The protein localises to the cytoplasm. The enzyme catalyses carbamoyl phosphate + L-ornithine = L-citrulline + phosphate + H(+). The protein operates within amino-acid biosynthesis; L-arginine biosynthesis; L-arginine from L-ornithine and carbamoyl phosphate: step 1/3. Reversibly catalyzes the transfer of the carbamoyl group from carbamoyl phosphate (CP) to the N(epsilon) atom of ornithine (ORN) to produce L-citrulline. The protein is Ornithine carbamoyltransferase of Methylococcus capsulatus (strain ATCC 33009 / NCIMB 11132 / Bath).